The primary structure comprises 325 residues: Tagatose 1,6-diphosphate aldolase 1 (325 aa).

It belongs to the aldolase LacD family.

It catalyses the reaction D-tagatofuranose 1,6-bisphosphate = D-glyceraldehyde 3-phosphate + dihydroxyacetone phosphate. Its pathway is carbohydrate metabolism; D-tagatose 6-phosphate degradation; D-glyceraldehyde 3-phosphate and glycerone phosphate from D-tagatose 6-phosphate: step 2/2. The protein is Tagatose 1,6-diphosphate aldolase 1 (lacD1) of Streptococcus pyogenes serotype M1.